The chain runs to 387 residues: NAD(P)H oxidoreductase RTN4IP1, mitochondrial (387 aa).

A mitochondrion-targeting transit peptide spans 1-27 (MLMCRRWLVCSLRCHYRSFSFSAARRT). Positions 38-379 (GKNDVLRFTK…QGHARGKTVV (342 aa)) constitute an Enoyl reductase (ER) domain. Ser200, Gly202, Val203, Ser223, Tyr241, Leu286, Gly327, Phe329, His372, Ala373, and Arg374 together coordinate NADPH.

Belongs to the zinc-containing alcohol dehydrogenase family. Quinone oxidoreductase subfamily.

Its subcellular location is the mitochondrion matrix. It localises to the mitochondrion outer membrane. The enzyme catalyses a 3-demethylubiquinone + NADH + 2 H(+) = a 3-demethylubiquinol + NAD(+). It carries out the reaction a 3-demethylubiquinone + NADPH + 2 H(+) = a 3-demethylubiquinol + NADP(+). The catalysed reaction is 3-demethylubiquinone-10 + NADH + 2 H(+) = 3-demethylubiquinol-10 + NAD(+). It catalyses the reaction 3-demethylubiquinone-10 + NADPH + 2 H(+) = 3-demethylubiquinol-10 + NADP(+). The protein operates within cofactor biosynthesis; ubiquinone biosynthesis. Functionally, NAD(P)H oxidoreductase involved in the ubiquinone biosynthetic pathway. Required for the O-methyltransferase activity of COQ3. Able to catalyze the oxidoreduction of 3-demethylubiquinone into 3-demethylubiquinol in vitro. However, it is unclear if 3-demethylubiquinone constitutes a substrate in vivo. May also play a role in the regulation of retinal ganglion cell (RGC) neurite outgrowth, and hence in the development of the inner retina and optic nerve. This chain is NAD(P)H oxidoreductase RTN4IP1, mitochondrial (rtn4ip1), found in Danio rerio (Zebrafish).